We begin with the raw amino-acid sequence, 199 residues long: Recombination protein RecR (199 aa).

Residues 58-73 (CKKCFNLTSEDECEIC) form a C4-type zinc finger. The region spanning 81–175 (KLICVVSETK…KVTRIAYGLP (95 aa)) is the Toprim domain.

Belongs to the RecR family.

Its function is as follows. May play a role in DNA repair. It seems to be involved in an RecBC-independent recombinational process of DNA repair. It may act with RecF and RecO. The chain is Recombination protein RecR from Prochlorococcus marinus (strain AS9601).